The sequence spans 209 residues: Large ribosomal subunit protein uL3 (209 aa).

Residues 130-162 (RGPMTHGSKFKRAPGSMGASSDPSRTFKNKRMP) form a disordered region.

This sequence belongs to the universal ribosomal protein uL3 family. Part of the 50S ribosomal subunit. Forms a cluster with proteins L14 and L19.

Functionally, one of the primary rRNA binding proteins, it binds directly near the 3'-end of the 23S rRNA, where it nucleates assembly of the 50S subunit. The protein is Large ribosomal subunit protein uL3 of Clostridium botulinum (strain Alaska E43 / Type E3).